Here is a 511-residue protein sequence, read N- to C-terminus: MKKRALVSVSDKTGVVEFVKGLLEQGIEVISTGGTKKLLEENGLQVIGISEVTGFPEIMDGRVKTLHPNIHGGLLAVRDNETHVAQMNELGMEPIDFVIVNLYPFKETIAKPDVTFADAIENIDIGGPTMIRSAAKNHKFVSVIVDPVDYDVVLAELKENGEVKEETKRKLAAKVFRHTAAYDALISNYLTEQMGEESPETLTVTFEKKQDLRYGENPHQKATFYKAPFTVTSSVAYAEQLHGKELSYNNINDADAALSIVKEFTEPAVVAVKHMNPCGVGVGTDIHEAYTRAYEADPVSIFGGIIAANREIDKATAEKLHEIFLEIIIAPSFSKEALEVLQSKKNLRLLTVNIEKATSASKKLTSVQGGLLVQEEDTLSLDESTISIPTKREPSEQEWKDLKLAWKVVKHVKSNAIVLAKDDMTIGVGAGQMNRVGSAKIAITQAGEKAQGSALASDAFFPMPDTVEEAAKAGITAIIQPGGSIRDEDSIKVADTYGIAMVFTGVRHFKH.

Positions 1-145 (MKKRALVSVS…KNHKFVSVIV (145 aa)) constitute an MGS-like domain.

The protein belongs to the PurH family.

It carries out the reaction (6R)-10-formyltetrahydrofolate + 5-amino-1-(5-phospho-beta-D-ribosyl)imidazole-4-carboxamide = 5-formamido-1-(5-phospho-D-ribosyl)imidazole-4-carboxamide + (6S)-5,6,7,8-tetrahydrofolate. The catalysed reaction is IMP + H2O = 5-formamido-1-(5-phospho-D-ribosyl)imidazole-4-carboxamide. It functions in the pathway purine metabolism; IMP biosynthesis via de novo pathway; 5-formamido-1-(5-phospho-D-ribosyl)imidazole-4-carboxamide from 5-amino-1-(5-phospho-D-ribosyl)imidazole-4-carboxamide (10-formyl THF route): step 1/1. Its pathway is purine metabolism; IMP biosynthesis via de novo pathway; IMP from 5-formamido-1-(5-phospho-D-ribosyl)imidazole-4-carboxamide: step 1/1. In Bacillus cereus (strain 03BB102), this protein is Bifunctional purine biosynthesis protein PurH.